The primary structure comprises 481 residues: ATP synthase subunit beta (481 aa).

167-174 contacts ATP; sequence GGAGVGKT.

The protein belongs to the ATPase alpha/beta chains family. F-type ATPases have 2 components, CF(1) - the catalytic core - and CF(0) - the membrane proton channel. CF(1) has five subunits: alpha(3), beta(3), gamma(1), delta(1), epsilon(1). CF(0) has three main subunits: a(1), b(2) and c(9-12). The alpha and beta chains form an alternating ring which encloses part of the gamma chain. CF(1) is attached to CF(0) by a central stalk formed by the gamma and epsilon chains, while a peripheral stalk is formed by the delta and b chains.

It is found in the cell membrane. The catalysed reaction is ATP + H2O + 4 H(+)(in) = ADP + phosphate + 5 H(+)(out). In terms of biological role, produces ATP from ADP in the presence of a proton gradient across the membrane. The catalytic sites are hosted primarily by the beta subunits. In Corynebacterium diphtheriae (strain ATCC 700971 / NCTC 13129 / Biotype gravis), this protein is ATP synthase subunit beta.